Reading from the N-terminus, the 76-residue chain is Omega-conotoxin-like TxO3 (76 aa).

The N-terminal stretch at 1-22 (MKLTCVVIVAVLFLTAWTFVTA) is a signal peptide. A propeptide spanning residues 23-52 (VPHSSNALENLYLKAHHEMNNPEASELNKR) is cleaved from the precursor. 3 disulfide bridges follow: cysteine 53/cysteine 67, cysteine 60/cysteine 71, and cysteine 66/cysteine 75.

It belongs to the conotoxin O1 superfamily. In terms of tissue distribution, expressed by the venom duct.

It localises to the secreted. In terms of biological role, omega-conotoxins act at presynaptic membranes, they bind and block voltage-gated calcium channels (Cav). The chain is Omega-conotoxin-like TxO3 (TXO3) from Conus textile (Cloth-of-gold cone).